The primary structure comprises 343 residues: MHILLNTLYLMTPRTLVRLDHETVKIEVEGELKMQIPLHHLGSIVCFGDVTLTTPLIMRCAEDKRLIVFHDQHGRFKARVEGPVSGNVFLRHAQHEALSDSKKTTAIARNIVAGKIRNTRQVVLRGAREADNEDDRKALQETARELAHGLDALSRSPDLEQIRGIEGNAARHYFATLDRMVRVNREAFKITHRNRRPPLDRMNALLSYIYALLLNDCLSAAEGVGLDPQIGYLHVLRSGRPALALDLMEEFRAILADRLALTLVNRRQIDERDFVERPGGAVHINDNARKEIAIAYQKRKQEEVLHPVLNRKVPLGLVPHIQARLLARVLRGDAEEYLPFMYR.

Mn(2+) is bound by residues Glu166, His234, and Glu249.

The protein belongs to the CRISPR-associated endonuclease Cas1 family. Homodimer, forms a heterotetramer with a Cas2 homodimer. It depends on Mg(2+) as a cofactor. Mn(2+) serves as cofactor.

Functionally, CRISPR (clustered regularly interspaced short palindromic repeat), is an adaptive immune system that provides protection against mobile genetic elements (viruses, transposable elements and conjugative plasmids). CRISPR clusters contain spacers, sequences complementary to antecedent mobile elements, and target invading nucleic acids. CRISPR clusters are transcribed and processed into CRISPR RNA (crRNA). Acts as a dsDNA endonuclease. Involved in the integration of spacer DNA into the CRISPR cassette. This chain is CRISPR-associated endonuclease Cas1 1, found in Moorella thermoacetica (strain ATCC 39073 / JCM 9320).